The primary structure comprises 219 residues: MEHEFWHERWAKDQIGFHEGTVNQYLHDHWPELAGNGTDAVFVPLCGKAHDMWWLHDRGHPIIGVELSEVACKDFFEEAQEKASVHPGEPFTTFRHDDLQIWCGDYFQLVPDDLKHIRLVYDRAALIALPPEMRKSYVNHLTAIIPDDTRILLITLDYDSSEMQGPPFNVTDDEVFRLYGEDYEINQVLKRDMARDNPFAKRRGLRNGATESVFTLVKK.

S-adenosyl-L-methionine is bound by residues W10, L45, E66, and R123.

It belongs to the class I-like SAM-binding methyltransferase superfamily. TPMT family.

The protein resides in the cytoplasm. It catalyses the reaction S-adenosyl-L-methionine + a thiopurine = S-adenosyl-L-homocysteine + a thiopurine S-methylether.. The sequence is that of Thiopurine S-methyltransferase from Marinobacter nauticus (strain ATCC 700491 / DSM 11845 / VT8) (Marinobacter aquaeolei).